Here is a 93-residue protein sequence, read N- to C-terminus: Small ribosomal subunit protein bS18 (93 aa).

The protein belongs to the bacterial ribosomal protein bS18 family. In terms of assembly, part of the 30S ribosomal subunit. Forms a tight heterodimer with protein bS6.

Binds as a heterodimer with protein bS6 to the central domain of the 16S rRNA, where it helps stabilize the platform of the 30S subunit. This Acidovorax ebreus (strain TPSY) (Diaphorobacter sp. (strain TPSY)) protein is Small ribosomal subunit protein bS18.